The primary structure comprises 246 residues: Probable transcriptional regulatory protein TM1040_1893 (246 aa).

Residues 1-21 (MAGHSKWANIQHRKGRQDAAR) are disordered.

It belongs to the TACO1 family.

The protein resides in the cytoplasm. In Ruegeria sp. (strain TM1040) (Silicibacter sp.), this protein is Probable transcriptional regulatory protein TM1040_1893.